The sequence spans 734 residues: Photosystem I P700 chlorophyll a apoprotein A2 (734 aa).

A run of 8 helical transmembrane segments spans residues 46–69 (IFASHFGHLAIIFLWVSGNLFHVA), 135–158 (LYQGSIFLLILSALFLFAGWLHLQ), 175–199 (LNHHLAGLFGFSSLAWTGHLVHVAI), 273–291 (IAHHHLAIAVIFIIAGHMY), 330–353 (LHFQLALALASLGVVTSLVAQHMY), 369–395 (AALYTHHQYIATFIMCGAFAHGAIFLI), 417–439 (AIISHLSWVSLFLGFHTLGLYVH), and 517–535 (FLVHHAIALGLHTTTLILV). Positions 559 and 568 each coordinate [4Fe-4S] cluster. 2 helical membrane passes run 575–596 (AFYLAVFWALNTVGWVTFYWHW) and 643–665 (LSVWSWMFLFGHLIWATGFMFLI). H654, M662, and Y670 together coordinate chlorophyll a. W671 provides a ligand contact to phylloquinone. A helical membrane pass occupies residues 707–727 (VVGLAHFTVGYFLTYAAFLIA).

The protein belongs to the PsaA/PsaB family. The PsaA/B heterodimer binds the P700 chlorophyll special pair and subsequent electron acceptors. PSI consists of a core antenna complex that captures photons, and an electron transfer chain that converts photonic excitation into a charge separation. The cyanobacterial PSI reaction center is composed of one copy each of PsaA,B,C,D,E,F,I,J,K,L,M and X, and forms trimeric complexes. Requires PSI electron transfer chain: 5 chlorophyll a, 1 chlorophyll a', 2 phylloquinones and 3 4Fe-4S clusters. PSI core antenna: 90 chlorophyll a, 22 carotenoids, 3 phospholipids and 1 galactolipid. P700 is a chlorophyll a/chlorophyll a' dimer, A0 is one or more chlorophyll a, A1 is one or both phylloquinones and FX is a shared 4Fe-4S iron-sulfur center. as cofactor.

The protein localises to the cellular thylakoid membrane. It carries out the reaction reduced [plastocyanin] + hnu + oxidized [2Fe-2S]-[ferredoxin] = oxidized [plastocyanin] + reduced [2Fe-2S]-[ferredoxin]. PsaA and PsaB bind P700, the primary electron donor of photosystem I (PSI), as well as the electron acceptors A0, A1 and FX. PSI is a plastocyanin/cytochrome c6-ferredoxin oxidoreductase, converting photonic excitation into a charge separation, which transfers an electron from the donor P700 chlorophyll pair to the spectroscopically characterized acceptors A0, A1, FX, FA and FB in turn. Oxidized P700 is reduced on the lumenal side of the thylakoid membrane by plastocyanin or cytochrome c6. This chain is Photosystem I P700 chlorophyll a apoprotein A2, found in Synechococcus elongatus (strain ATCC 33912 / PCC 7942 / FACHB-805) (Anacystis nidulans R2).